Here is a 339-residue protein sequence, read N- to C-terminus: Glyceraldehyde-3-phosphate dehydrogenase (339 aa).

NAD(+) contacts are provided by residues 13–14, aspartate 35, and lysine 84; that span reads RI. Residues 156–158, threonine 187, 216–217, and arginine 239 contribute to the D-glyceraldehyde 3-phosphate site; these read SCT and TG. Residue cysteine 157 is the Nucleophile of the active site. Position 321 (asparagine 321) interacts with NAD(+).

This sequence belongs to the glyceraldehyde-3-phosphate dehydrogenase family. Homotetramer.

It is found in the cytoplasm. The catalysed reaction is D-glyceraldehyde 3-phosphate + phosphate + NAD(+) = (2R)-3-phospho-glyceroyl phosphate + NADH + H(+). Its pathway is carbohydrate degradation; glycolysis; pyruvate from D-glyceraldehyde 3-phosphate: step 1/5. This is Glyceraldehyde-3-phosphate dehydrogenase (G3PD) from Brugia malayi (Filarial nematode worm).